The following is a 553-amino-acid chain: Membrane protein insertase YidC (553 aa).

A helical transmembrane segment spans residues 6-26 (LIALVLSLLVLVFWEMYFGLF). The interval 34 to 59 (NKTEQAAPTTTQPATPQTVPPQAATP) is disordered. Residues 38–59 (QAAPTTTQPATPQTVPPQAATP) show a composition bias toward low complexity. A run of 5 helical transmembrane segments spans residues 331 to 351 (LASAVDYGWFTFIAKPLVYVL), 360 to 380 (NWGVAIILLTIVIKILFWPLT), 424 to 444 (VNPMGGCLPMLLQIPVFFALY), 477 to 497 (IPYLGGLPVLTLLMGITMFIQ), and 512 to 532 (IMMIMPVMFTVFFVNFPSGLV).

Belongs to the OXA1/ALB3/YidC family. Type 1 subfamily. In terms of assembly, interacts with the Sec translocase complex via SecD. Specifically interacts with transmembrane segments of nascent integral membrane proteins during membrane integration.

The protein resides in the cell inner membrane. Its function is as follows. Required for the insertion and/or proper folding and/or complex formation of integral membrane proteins into the membrane. Involved in integration of membrane proteins that insert both dependently and independently of the Sec translocase complex, as well as at least some lipoproteins. Aids folding of multispanning membrane proteins. The chain is Membrane protein insertase YidC from Syntrophobacter fumaroxidans (strain DSM 10017 / MPOB).